Consider the following 182-residue polypeptide: Isopentenyl-diphosphate Delta-isomerase (182 aa).

Residues histidine 25 and histidine 32 each contribute to the Mn(2+) site. The Nudix hydrolase domain occupies 30–164; it reads LLHLAFSSWL…PWAFSPWMVM (135 aa). Residue cysteine 67 is part of the active site. Residue histidine 69 coordinates Mn(2+). Glutamate 87 contributes to the Mg(2+) binding site. Glutamate 114 and glutamate 116 together coordinate Mn(2+). Glutamate 116 is a catalytic residue.

Belongs to the IPP isomerase type 1 family. In terms of assembly, homodimer. Mg(2+) serves as cofactor. Requires Mn(2+) as cofactor.

It is found in the cytoplasm. The catalysed reaction is isopentenyl diphosphate = dimethylallyl diphosphate. It participates in isoprenoid biosynthesis; dimethylallyl diphosphate biosynthesis; dimethylallyl diphosphate from isopentenyl diphosphate: step 1/1. Functionally, catalyzes the 1,3-allylic rearrangement of the homoallylic substrate isopentenyl (IPP) to its highly electrophilic allylic isomer, dimethylallyl diphosphate (DMAPP). In Escherichia coli O9:H4 (strain HS), this protein is Isopentenyl-diphosphate Delta-isomerase.